Reading from the N-terminus, the 589-residue chain is MATKSSTSQAVSKLRQPIVCVLGHVDHGKTTLLDLIRGTSVASKEPGGITQRIAATTVDISRILKETEKLNTKGLKIPGLLFIDTPGHVAFSNMRARGGALADLAILVIDINEGIMPQTVESIDILKKFKTPFIIAANKIDLIPFFTDVKTNLFTEFIRKQRQEYVNELDNRIYSIMNKLYEFGLNSDRFDRISDFTKTIAIVPVSAKKNIGVPEILMVLAGLAQRFLEREIEYRDINGHATIIEVRKEESAGITLDAVLYQGTISVGDSIAVNTKNGPAVTKVKALFVNTGKGQRALKEVKKVSAAEGIRVLISDKIDVISGSPMIVVRDNLDQVMKEIEEESKVDIPLSEEGIYVKAEAIGSLEAISYELNKQGIKIKQAQVGDITKRDIMDVSTLPDPINRIIVGFNVSVLPEARDAMSSSDVSIVTGDIIYKIVEDTQKVMDERKKMLLQGRKMSMPVPSRIRILPQYIFRASKPVIVGVRVETGQIKVGDNLIRGDGKYAGTIKSIRNEDVSVRYQDAPAEVAVAIDNVTLNRQIFPDDVLYVDITENVVKELRRAPMEKEIMDTLEEIIRIKRKDNPFWGTRV.

A tr-type G domain is found at leucine 14–glutamate 229. The interval glycine 23 to threonine 30 is G1. GTP is bound at residue glycine 23–threonine 30. Residues glycine 48–arginine 52 form a G2 region. Residues aspartate 84 to glycine 87 form a G3 region. Residues aspartate 84–histidine 88 and asparagine 138–aspartate 141 each bind GTP. Positions asparagine 138 to aspartate 141 are G4. The tract at residues serine 206–lysine 208 is G5.

It belongs to the TRAFAC class translation factor GTPase superfamily. Classic translation factor GTPase family. IF-2 subfamily.

In terms of biological role, function in general translation initiation by promoting the binding of the formylmethionine-tRNA to ribosomes. Seems to function along with eIF-2. The sequence is that of Probable translation initiation factor IF-2 (infB) from Thermoplasma acidophilum (strain ATCC 25905 / DSM 1728 / JCM 9062 / NBRC 15155 / AMRC-C165).